A 166-amino-acid chain; its full sequence is Desiccation-related protein At2g46140 (166 aa).

Belongs to the LEA type 2 family.

This chain is Desiccation-related protein At2g46140, found in Arabidopsis thaliana (Mouse-ear cress).